The chain runs to 223 residues: Small ribosomal subunit protein uS3 (223 aa).

The region spanning 39–117 is the KH type-2 domain; sequence IREFLRKKPS…RPELNAKLVA (79 aa).

Belongs to the universal ribosomal protein uS3 family. In terms of assembly, part of the 30S ribosomal subunit. Forms a tight complex with proteins S10 and S14.

Its function is as follows. Binds the lower part of the 30S subunit head. Binds mRNA in the 70S ribosome, positioning it for translation. In Chlamydia abortus (strain DSM 27085 / S26/3) (Chlamydophila abortus), this protein is Small ribosomal subunit protein uS3.